A 362-amino-acid polypeptide reads, in one-letter code: 2-aminoethylphosphonate--pyruvate transaminase (362 aa).

Lys193 bears the N6-(pyridoxal phosphate)lysine mark.

Belongs to the class-V pyridoxal-phosphate-dependent aminotransferase family. PhnW subfamily. As to quaternary structure, homodimer. It depends on pyridoxal 5'-phosphate as a cofactor.

It catalyses the reaction (2-aminoethyl)phosphonate + pyruvate = phosphonoacetaldehyde + L-alanine. Its function is as follows. Involved in phosphonate degradation. This chain is 2-aminoethylphosphonate--pyruvate transaminase, found in Bacteroides fragilis (strain YCH46).